A 207-amino-acid chain; its full sequence is Large ribosomal subunit protein uL4 (207 aa).

The tract at residues 47-78 (GTAKTKTRAEVRGGGKKPWRQKGTGRARQGSI) is disordered. A compositionally biased stretch (basic residues) spans 60–71 (GGKKPWRQKGTG).

Belongs to the universal ribosomal protein uL4 family. In terms of assembly, part of the 50S ribosomal subunit.

Its function is as follows. One of the primary rRNA binding proteins, this protein initially binds near the 5'-end of the 23S rRNA. It is important during the early stages of 50S assembly. It makes multiple contacts with different domains of the 23S rRNA in the assembled 50S subunit and ribosome. Functionally, forms part of the polypeptide exit tunnel. The chain is Large ribosomal subunit protein uL4 from Acholeplasma laidlawii (strain PG-8A).